We begin with the raw amino-acid sequence, 536 residues long: CTP synthase (536 aa).

The segment at 1 to 268 (MSTKYVFVTG…DNLVCEKLHL (268 aa)) is amidoligase domain. Ser14 provides a ligand contact to CTP. Residue Ser14 coordinates UTP. 15-20 (ALGKGI) contributes to the ATP binding site. Tyr55 lines the L-glutamine pocket. Asp72 provides a ligand contact to ATP. Residues Asp72 and Glu142 each coordinate Mg(2+). CTP is bound by residues 149-151 (DIE), 189-194 (KTKPTQ), and Lys225. UTP-binding positions include 189 to 194 (KTKPTQ) and Lys225. A Glutamine amidotransferase type-1 domain is found at 293–535 (KIALVGKYVE…IKAALEENKS (243 aa)). Residue Gly355 participates in L-glutamine binding. The active-site Nucleophile; for glutamine hydrolysis is Cys382. L-glutamine contacts are provided by residues 383–386 (LGMQ), Glu406, and Arg463. Catalysis depends on residues His508 and Glu510.

The protein belongs to the CTP synthase family. As to quaternary structure, homotetramer.

It catalyses the reaction UTP + L-glutamine + ATP + H2O = CTP + L-glutamate + ADP + phosphate + 2 H(+). The enzyme catalyses L-glutamine + H2O = L-glutamate + NH4(+). It carries out the reaction UTP + NH4(+) + ATP = CTP + ADP + phosphate + 2 H(+). It participates in pyrimidine metabolism; CTP biosynthesis via de novo pathway; CTP from UDP: step 2/2. Allosterically activated by GTP, when glutamine is the substrate; GTP has no effect on the reaction when ammonia is the substrate. The allosteric effector GTP functions by stabilizing the protein conformation that binds the tetrahedral intermediate(s) formed during glutamine hydrolysis. Inhibited by the product CTP, via allosteric rather than competitive inhibition. Functionally, catalyzes the ATP-dependent amination of UTP to CTP with either L-glutamine or ammonia as the source of nitrogen. Regulates intracellular CTP levels through interactions with the four ribonucleotide triphosphates. The sequence is that of CTP synthase from Clostridium beijerinckii (strain ATCC 51743 / NCIMB 8052) (Clostridium acetobutylicum).